The chain runs to 369 residues: Peptide chain release factor 2 (369 aa).

Position 250 is an N5-methylglutamine (Gln-250).

The protein belongs to the prokaryotic/mitochondrial release factor family. Methylated by PrmC. Methylation increases the termination efficiency of RF2.

Its subcellular location is the cytoplasm. Its function is as follows. Peptide chain release factor 2 directs the termination of translation in response to the peptide chain termination codons UGA and UAA. The protein is Peptide chain release factor 2 (prfB) of Rickettsia prowazekii (strain Madrid E).